The sequence spans 284 residues: Probable plastid-lipid-associated protein 10, chloroplastic (284 aa).

A chloroplast-targeting transit peptide spans 1–40; the sequence is MDRIASATFSCPAISLSRVCRISPFGLNIKTNHRKRFSCR.

This sequence belongs to the PAP/fibrillin family.

It localises to the plastid. It is found in the chloroplast. Its subcellular location is the plastoglobule. The chain is Probable plastid-lipid-associated protein 10, chloroplastic (PAP10) from Arabidopsis thaliana (Mouse-ear cress).